Reading from the N-terminus, the 111-residue chain is Ribonuclease P protein component (111 aa).

It belongs to the RnpA family. Consists of a catalytic RNA component (M1 or rnpB) and a protein subunit.

The enzyme catalyses Endonucleolytic cleavage of RNA, removing 5'-extranucleotides from tRNA precursor.. Its function is as follows. RNaseP catalyzes the removal of the 5'-leader sequence from pre-tRNA to produce the mature 5'-terminus. It can also cleave other RNA substrates such as 4.5S RNA. The protein component plays an auxiliary but essential role in vivo by binding to the 5'-leader sequence and broadening the substrate specificity of the ribozyme. This Alkaliphilus metalliredigens (strain QYMF) protein is Ribonuclease P protein component.